The following is a 114-amino-acid chain: uncharacterized protein (114 aa).

A run of 3 helical transmembrane segments spans residues 21-41, 65-85, and 93-113; these read LASS…VCLF, GCFS…SALI, and LSVF…ILTD.

The protein resides in the membrane. This is an uncharacterized protein from Saccharomyces cerevisiae (strain ATCC 204508 / S288c) (Baker's yeast).